Here is an 875-residue protein sequence, read N- to C-terminus: Translation initiation factor IF-2 (875 aa).

Disordered stretches follow at residues 123–204 (EKEK…EKPK) and 240–278 (ETKE…PVET). Positions 240 to 252 (ETKEEKAELEALR) are enriched in basic and acidic residues. The span at 259–268 (PKKKKKKKKK) shows a compositional bias: basic residues. Over residues 269 to 278 (KEEEKAPVET) the composition is skewed to basic and acidic residues. A tr-type G domain is found at 379-547 (ERPPVVTVMG…NILLVSEILE (169 aa)). The interval 388–395 (GHVDHGKT) is G1. 388 to 395 (GHVDHGKT) lines the GTP pocket. Residues 413-417 (GITQH) are G2. The G3 stretch occupies residues 435–438 (DTPG). Residues 435–439 (DTPGH) and 489–492 (NKID) each bind GTP. Residues 489–492 (NKID) are G4. The tract at residues 525 to 527 (SAK) is G5.

The protein belongs to the TRAFAC class translation factor GTPase superfamily. Classic translation factor GTPase family. IF-2 subfamily.

The protein resides in the cytoplasm. One of the essential components for the initiation of protein synthesis. Protects formylmethionyl-tRNA from spontaneous hydrolysis and promotes its binding to the 30S ribosomal subunits. Also involved in the hydrolysis of GTP during the formation of the 70S ribosomal complex. The chain is Translation initiation factor IF-2 from Persephonella marina (strain DSM 14350 / EX-H1).